The sequence spans 368 residues: D-Ala-D/L-Ala epimerase (368 aa).

Substrate contacts are provided by residues Thr-135 and 160-162; that span reads KVK. Positions 190, 216, and 241 each coordinate Mg(2+). Substrate-binding positions include Lys-265 and 318–320; that span reads DFD.

Belongs to the mandelate racemase/muconate lactonizing enzyme family. Mg(2+) is required as a cofactor.

Functionally, catalyzes the epimerization of D-Ala-D-Ala to D-Ala-L-Ala. Has broad substrate specificity and catalyzes the epimerization of a variety of dipeptides containing an N-terminal Ala followed by a hydrophobic or polar residue, such as Val, Ser and Met (in vitro). This chain is D-Ala-D/L-Ala epimerase (tfdD), found in Cytophaga hutchinsonii (strain ATCC 33406 / DSM 1761 / CIP 103989 / NBRC 15051 / NCIMB 9469 / D465).